The sequence spans 607 residues: Replication protein E1 (607 aa).

The short motif at 81-83 is the Nuclear localization signal element; sequence KRK. Phosphoserine; by host is present on residues Ser-87 and Ser-95. Residues 94–103 carry the Nuclear export signal motif; that stretch reads LSPRLQSLNL. Residues 147 to 310 are DNA-binding region; the sequence is QGGVGLGHIE…TMIQHQTADS (164 aa). The region spanning 409 to 559 is the SF3 helicase domain; it reads LNFIVFLDKF…FPFDSDDKPL (151 aa). 435-442 contacts ATP; sequence GPPDTGKS. A Glycyl lysine isopeptide (Lys-Gly) (interchain with G-Cter in SUMO) cross-link involves residue Lys-516. The segment at 583–607 is disordered; the sequence is QEDEGEDGSTQRTFQCTTRQVNGPV. The span at 590–607 shows a compositional bias: polar residues; it reads GSTQRTFQCTTRQVNGPV.

This sequence belongs to the papillomaviridae E1 protein family. Can form hexamers. Interacts with E2 protein; this interaction increases E1 DNA binding specificity. Interacts with host DNA polymerase subunit POLA2. Interacts with host single stranded DNA-binding protein RPA1. Interacts with host TOP1; this interaction stimulates the enzymatic activity of TOP1. Post-translationally, phosphorylated. In terms of processing, sumoylated.

It localises to the host nucleus. It carries out the reaction Couples ATP hydrolysis with the unwinding of duplex DNA by translocating in the 3'-5' direction.. It catalyses the reaction ATP + H2O = ADP + phosphate + H(+). Its function is as follows. ATP-dependent DNA 3'-5' helicase required for initiation of viral DNA replication. It forms a complex with the viral E2 protein. The E1-E2 complex binds to the replication origin which contains binding sites for both proteins. During the initial step, a dimer of E1 interacts with a dimer of protein E2 leading to a complex that binds the viral origin of replication with high specificity. Then, a second dimer of E1 displaces the E2 dimer in an ATP-dependent manner to form the E1 tetramer. Following this, two E1 monomers are added to each half of the site, which results in the formation of two E1 trimers on the viral ori. Subsequently, two hexamers will be created. The double hexamer acts as a bi-directional helicase machinery and unwinds the viral DNA and then recruits the host DNA polymerase to start replication. In Human papillomavirus 23, this protein is Replication protein E1.